Consider the following 86-residue polypeptide: Sec-independent protein translocase protein TatA (86 aa).

A helical transmembrane segment spans residues 3–23; the sequence is IFGVGLPEVTVILILALLIFG. Positions 56-86 are disordered; sequence MNEEDESPKSIESNQTNEINQEKIDSENSKK. Over residues 65–74 the composition is skewed to polar residues; sequence SIESNQTNEI. Residues 75-86 show a composition bias toward basic and acidic residues; it reads NQEKIDSENSKK.

Belongs to the TatA/E family. In terms of assembly, forms a complex with TatC.

Its subcellular location is the cell inner membrane. Its function is as follows. Part of the twin-arginine translocation (Tat) system that transports large folded proteins containing a characteristic twin-arginine motif in their signal peptide across membranes. TatA could form the protein-conducting channel of the Tat system. This Prochlorococcus marinus (strain MIT 9215) protein is Sec-independent protein translocase protein TatA.